The primary structure comprises 365 residues: tRNA/tmRNA (uracil-C(5))-methyltransferase (365 aa).

Residues Gln-189, Tyr-217, Asn-222, Glu-238, and Asp-298 each coordinate S-adenosyl-L-methionine. Cys-323 (nucleophile) is an active-site residue. Glu-357 serves as the catalytic Proton acceptor.

This sequence belongs to the class I-like SAM-binding methyltransferase superfamily. RNA M5U methyltransferase family. TrmA subfamily.

The enzyme catalyses uridine(54) in tRNA + S-adenosyl-L-methionine = 5-methyluridine(54) in tRNA + S-adenosyl-L-homocysteine + H(+). The catalysed reaction is uridine(341) in tmRNA + S-adenosyl-L-methionine = 5-methyluridine(341) in tmRNA + S-adenosyl-L-homocysteine + H(+). Dual-specificity methyltransferase that catalyzes the formation of 5-methyluridine at position 54 (m5U54) in all tRNAs, and that of position 341 (m5U341) in tmRNA (transfer-mRNA). This is tRNA/tmRNA (uracil-C(5))-methyltransferase from Shewanella baltica (strain OS155 / ATCC BAA-1091).